The primary structure comprises 1738 residues: Complement C4-B (1738 aa).

Residues 1 to 19 (MRLLWGLAWVFSFCASSLQ) form the signal peptide. C66 and C95 are joined by a disulfide. N224 carries an N-linked (GlcNAc...) asparagine glycan. C633 and C667 form a disulfide bridge. Residues 674 to 677 (RQKR) constitute a propeptide that is removed on maturation. Cystine bridges form between C700-C726, C701-C733, and C714-C734. In terms of domain architecture, Anaphylatoxin-like spans 700–734 (CCQDGMTKLPMKRTCEQRAARVPQQACREPFLSCC). N-linked (GlcNAc...) asparagine glycosylation is present at N743. Positions 1006 to 1009 (CAEQ) form a cross-link, isoglutamyl cysteine thioester (Cys-Gln). 2 N-linked (GlcNAc...) asparagine glycosylation sites follow: N1324 and N1387. A sulfotyrosine mark is found at Y1413, Y1416, and Y1417. Residues 1444 to 1447 (RRRR) constitute a propeptide that is removed on maturation. 5 cysteine pairs are disulfide-bonded: C1465–C1529, C1577–C1582, C1589–C1667, C1612–C1736, and C1712–C1721. The 148-residue stretch at 1589-1736 (CPRLLRSLER…FLMEFSSRGC (148 aa)) folds into the NTR domain.

In absence of complement activation, circulates in blood as a disulfide-linked trimer of an alpha, beta and gamma chain. In terms of assembly, complement C4b is composed of complement C4b-A, complement C4 beta and complement C4 gamma chains that are associated via disulfide bonds. Non-enzymatic component of the C3 convertase, also named C4bC2b, composed of the serine protease complement C2b (C2), as well as complement C4b. Non-enzymatic component of the C5 convertase, also named C4bC2bC3b, composed of the serine protease complement C2b (C2), complement C3b, as well as complement C4b. Post-translationally, prior to secretion, the single-chain precursor is enzymatically cleaved by plasminogen (PLG) to yield non-identical chains alpha, beta and gamma. During activation of the complement systems, the alpha chain is cleaved into C4a and C4b by different proteases depending on the complement pathway: C4b stays linked to the beta and gamma chains, while C4a is released in the plasma. The alpha chain is cleaved by C1S to generate C4a and C4b following activation by the classical complement system. The alpha chain is cleaved to generate C4a and C4b by MASP2 following activation by the lectin complement system. The alpha chain is cleaved by GZMK to generate C4a and C4b following activation by the GZMK complement system. Further degradation of C4b by C1 into the inactive fragments C4c and C4d blocks the generation of C3 convertase. The proteolytic cleavages often are incomplete so that many structural forms can be found in plasma. In terms of processing, upon activation, the internal thioester bond reacts with carbohydrate antigens on the target surface to form amide or ester bonds, leading to covalent association with the surface of pathogens. Complement C4b interacts with complement C3b via a thioester linkage.

Its subcellular location is the secreted. It localises to the cell surface. Its function is as follows. Precursor of non-enzymatic components of the classical, lectin and GZMK complement pathways, which consist in a cascade of proteins that leads to phagocytosis and breakdown of pathogens and signaling that strengthens the adaptive immune system. Non-enzymatic component of C3 and C5 convertases. Generated following cleavage by complement proteases (C1S, MASP2 or GZMK, depending on the complement pathway), it covalently attaches to the surface of pathogens, where it acts as an opsonin that marks the surface of antigens for removal. It then recruits the serine protease complement C2b to form the C3 and C5 convertases, which cleave and activate C3 and C5, respectively, the next components of the complement pathways. Complement C4b-A isotype is responsible for effective binding to form amide bonds with immune aggregates or protein antigens, while complement C4b-B isotype catalyzes the transacylation of the thioester carbonyl group to form ester bonds with carbohydrate antigens. Functionally, putative humoral mediator released following cleavage by complement proteases (C1S, MASP2 or GZMK, depending on the complement pathway). While it is strongly similar to anaphylatoxins, its role is unclear. Was reported to act as a mediator of local inflammatory process; however these effects were probably due to contamination with C3a and/C5a anaphylatoxins in biological assays. This Mus musculus (Mouse) protein is Complement C4-B.